We begin with the raw amino-acid sequence, 802 residues long: MKKKNIKNSMNNHTPMIKQYLSLKSQYPDMLLFYQMGDFYELFYEDAERISELLKITLTKKGYSNHKIIPMAGVPCHKSEYYLSKLVKLGESIAICDQQKETDCKKKLISRKVVRIITPGTVTDEVLLEENEDNFIAAIWKENNQFGYSVLDLSLGFFGVSKIFSSCDLLSEIERTNPKEILYPENFSDVFLIESRKCIRKRSLLEFDLETSYKLLNLQFNTCSLDGFGIEKNNFVIRAAGCLLQYVKSMNMTVLPNIRQLKYNYMEDSIFMNFSTRKSLEITQNISGEKKNTLSAILNKTVTSMGSRMLNRWLNSPLKNFKIVRNRHESVEALKFFYKELQFILRQVNDLERIYSRLALRTASPHDFVRMRSTLEILPNLHLILKKIKSKHIKKIRLSIGYFEEVLCLLKKAISLKPSKCIRDGGVIAELYNIELDELRSIKINSKEYIKNFEQKEKKKLMIESFKIKFNKIIGYYIQISKRHTHLIPKYYVIIQTLKNTERYSVPLLKEYEEKVLNSEMRSLLLEKKLYAEIFNIIEPFLEKLQNSALALSELDVLVNLSERAISLNYTRPIMSEKYGISLLESRHPVVECFLKTPFIKNSVFLSRTQRMIIITGPNMGGKSTYMRQIALIVIMAGIGSFVPARYALIGSIDKIFTRIGSADDLSNGYSTFMMEMMEISNILHNATSNSLVLIDELGRGTSTNEGLSLAWSCSRYLININKSMTLLSTHFVELTKLEEKEKFVKNFHFSAIKSDLHIAFLYKIKNGISKKSYGISVASLSGLPDSVLEDAEKKLIEIENT.

617-624 (GPNMGGKS) is a binding site for ATP.

Belongs to the DNA mismatch repair MutS family.

Its function is as follows. This protein is involved in the repair of mismatches in DNA. It is possible that it carries out the mismatch recognition step. This protein has a weak ATPase activity. The chain is DNA mismatch repair protein MutS from Buchnera aphidicola subsp. Acyrthosiphon pisum (strain 5A).